A 400-amino-acid polypeptide reads, in one-letter code: Tryptophan synthase beta chain (400 aa).

Lysine 95 bears the N6-(pyridoxal phosphate)lysine mark.

The protein belongs to the TrpB family. As to quaternary structure, tetramer of two alpha and two beta chains. Pyridoxal 5'-phosphate is required as a cofactor.

The enzyme catalyses (1S,2R)-1-C-(indol-3-yl)glycerol 3-phosphate + L-serine = D-glyceraldehyde 3-phosphate + L-tryptophan + H2O. Its pathway is amino-acid biosynthesis; L-tryptophan biosynthesis; L-tryptophan from chorismate: step 5/5. The beta subunit is responsible for the synthesis of L-tryptophan from indole and L-serine. The chain is Tryptophan synthase beta chain from Chlorobaculum tepidum (strain ATCC 49652 / DSM 12025 / NBRC 103806 / TLS) (Chlorobium tepidum).